Here is an 81-residue protein sequence, read N- to C-terminus: MATKKSGGSSRNGRDSKGRRLGVKLFGGEYATIGSIIVRQRGTKILPYKNVGLGRDHTIFALKEGIVSYYKDKTKTYVSIV.

Positions 1 to 11 (MATKKSGGSSR) are enriched in polar residues. The tract at residues 1–20 (MATKKSGGSSRNGRDSKGRR) is disordered.

This sequence belongs to the bacterial ribosomal protein bL27 family.

Its subcellular location is the mitochondrion. This Reclinomonas americana protein is Large ribosomal subunit protein bL27m (RPL27).